The chain runs to 388 residues: Protein-glutamate methylesterase/protein-glutamine glutaminase 4 (388 aa).

Residues 4-121 (KVLVVDDSGF…SGDASKIKRL (118 aa)) form the Response regulatory domain. 4-aspartylphosphate is present on Asp-55. Residues 137–196 (SGASAPASVPQPAKPAAPIPVREPPKPAAPVTRPAEPRAKAPPAKPEPKPEVKAAKSRRT) are disordered. The span at 148-164 (PAKPAAPIPVREPPKPA) shows a compositional bias: pro residues. The region spanning 197–388 (PRQDYKVVLI…FAPRLIDGVG (192 aa)) is the CheB-type methylesterase domain. Active-site residues include Ser-209, His-236, and Asp-332.

This sequence belongs to the CheB family. Phosphorylated by CheA. Phosphorylation of the N-terminal regulatory domain activates the methylesterase activity.

It is found in the cytoplasm. The catalysed reaction is [protein]-L-glutamate 5-O-methyl ester + H2O = L-glutamyl-[protein] + methanol + H(+). The enzyme catalyses L-glutaminyl-[protein] + H2O = L-glutamyl-[protein] + NH4(+). Involved in chemotaxis. Part of a chemotaxis signal transduction system that modulates chemotaxis in response to various stimuli. Catalyzes the demethylation of specific methylglutamate residues introduced into the chemoreceptors (methyl-accepting chemotaxis proteins or MCP) by CheR. Also mediates the irreversible deamidation of specific glutamine residues to glutamic acid. This Hahella chejuensis (strain KCTC 2396) protein is Protein-glutamate methylesterase/protein-glutamine glutaminase 4.